The sequence spans 158 residues: SsrA-binding protein (158 aa).

It belongs to the SmpB family.

The protein resides in the cytoplasm. Required for rescue of stalled ribosomes mediated by trans-translation. Binds to transfer-messenger RNA (tmRNA), required for stable association of tmRNA with ribosomes. tmRNA and SmpB together mimic tRNA shape, replacing the anticodon stem-loop with SmpB. tmRNA is encoded by the ssrA gene; the 2 termini fold to resemble tRNA(Ala) and it encodes a 'tag peptide', a short internal open reading frame. During trans-translation Ala-aminoacylated tmRNA acts like a tRNA, entering the A-site of stalled ribosomes, displacing the stalled mRNA. The ribosome then switches to translate the ORF on the tmRNA; the nascent peptide is terminated with the 'tag peptide' encoded by the tmRNA and targeted for degradation. The ribosome is freed to recommence translation, which seems to be the essential function of trans-translation. This Hydrogenovibrio crunogenus (strain DSM 25203 / XCL-2) (Thiomicrospira crunogena) protein is SsrA-binding protein.